Reading from the N-terminus, the 347-residue chain is Cell shape-determining protein MreB (347 aa).

Residues 19 to 21 (TAN), 165 to 167 (GGT), 213 to 216 (ERIK), and 295 to 298 (GGAL) each bind ATP.

It belongs to the FtsA/MreB family. As to quaternary structure, forms polymers in the presence of ATP. Forms pairs of protofilaments that adopt an antiparallel arrangement and bind to lipids.

The protein localises to the cytoplasm. Its function is as follows. Forms membrane-associated dynamic filaments that are essential for cell shape determination. Acts by regulating cell wall synthesis and cell elongation, and thus cell shape. A feedback loop between cell geometry and MreB localization may maintain elongated cell shape by targeting cell wall growth to regions of negative cell wall curvature. Required for mid-cell peptidoglycan synthesis and cell division. Directs the localization of the cytosolic peptidoglycan precursor-synthesizing enzyme MurG. Also required for proper chromosome segregation. Directs the segregation of origin-proximal but not origin-distal loci. This is Cell shape-determining protein MreB from Caulobacter vibrioides (strain NA1000 / CB15N) (Caulobacter crescentus).